The following is a 449-amino-acid chain: Neurexin-1a-beta (449 aa).

The N-terminal stretch at 1-38 (MLRLWPGGAPGGLASILLRISLRLALWLPPLTLGSALA) is a signal peptide. Over 39–373 (EGPGELYVPQ…EVIRESSSTT (335 aa)) the chain is Extracellular. Positions 71–272 (TTYIFGRDGG…DPNVRVEGSA (202 aa)) constitute a Laminin G-like domain. The disordered stretch occupies residues 276 to 366 (GDMPSSSITP…AKGYPSPEVI (91 aa)). Positions 280–311 (SSSITPQSSVSAAGNRSETSPSITDITTTTAS) are enriched in low complexity. The segment covering 312 to 322 (NRQGKQTTTPQ) has biased composition (polar residues). The helical transmembrane segment at 374–394 (GMVVGIVAAAALCILILLYAM) threads the bilayer. Topologically, residues 395 to 449 (YKYRNRDEGSYHVDESRNYISNSATQPNGAAVKEKPIGVPKNKKDKKNKDKEYYV) are cytoplasmic. Positions 415–449 (SNSATQPNGAAVKEKPIGVPKNKKDKKNKDKEYYV) are disordered.

It belongs to the neurexin family.

It localises to the membrane. Neuronal cell surface protein that may be involved in cell recognition and cell adhesion. May play a role in formation or maintenance of synaptic junctions. In Danio rerio (Zebrafish), this protein is Neurexin-1a-beta (nrxn1a).